The sequence spans 505 residues: Cholesteryl ester transfer protein (505 aa).

The signal sequence occupies residues 1 to 24; sequence MLWAGGMRLGMARILLMLVHAAAA. N-linked (GlcNAc...) asparagine glycosylation is found at N68 and N114. C169 and C210 are disulfide-bonded. 3 N-linked (GlcNAc...) asparagine glycosylation sites follow: N266, N344, and N422.

The protein belongs to the BPI/LBP/Plunc superfamily. BPI/LBP family. As to expression, highly expressed in liver brain, heart, and spleen. Secreted in plasma.

It localises to the secreted. The enzyme catalyses cholesteryl (9Z-octadecenoate)(in) = cholesteryl (9Z-octadecenoate)(out). The catalysed reaction is 1,2,3-tri-(9Z-octadecenoyl)-glycerol(in) = 1,2,3-tri-(9Z-octadecenoyl)-glycerol(out). It catalyses the reaction cholesteryl (9Z,12Z)-octadecadienoate(in) = cholesteryl (9Z,12Z)-octadecadienoate(out). In terms of biological role, involved in the transfer of neutral lipids, including cholesteryl ester and triglyceride, among lipoprotein particles. Allows the net movement of cholesteryl ester from high density lipoproteins/HDL to triglyceride-rich very low density lipoproteins/VLDL, and the equimolar transport of triglyceride from VLDL to HDL. Regulates the reverse cholesterol transport, by which excess cholesterol is removed from peripheral tissues and returned to the liver for elimination. The polypeptide is Cholesteryl ester transfer protein (Gallus gallus (Chicken)).